The primary structure comprises 612 residues: Zinc metalloproteinase-disintegrin-like 8 (612 aa).

The signal sequence occupies residues 1–20; it reads MIQVLLVTICLAVFPYQGSS. Positions 21–189 are excised as a propeptide; that stretch reads IILGSGNVND…KKASQLNLTP (169 aa). The Peptidase M12B domain maps to 199–395; the sequence is KYIELVIVAD…NRPPCILNKP (197 aa). Glutamate 202 contacts Ca(2+). A glycan (N-linked (GlcNAc...) asparagine) is linked at asparagine 218. Aspartate 286 lines the Ca(2+) pocket. Cystine bridges form between cysteine 310-cysteine 390, cysteine 350-cysteine 374, and cysteine 352-cysteine 357. Histidine 335 serves as a coordination point for Zn(2+). The active site involves glutamate 336. Positions 339 and 345 each coordinate Zn(2+). The Ca(2+) site is built by cysteine 390, asparagine 393, valine 405, asparagine 408, phenylalanine 410, glutamate 412, glutamate 415, and aspartate 418. The Disintegrin domain maps to 403–489; the sequence is PPVCGNYFVE…DCPTDDFQRN (87 aa). Cystine bridges form between cysteine 406–cysteine 435, cysteine 417–cysteine 430, cysteine 419–cysteine 425, cysteine 429–cysteine 452, cysteine 443–cysteine 449, cysteine 448–cysteine 474, cysteine 461–cysteine 481, cysteine 468–cysteine 500, cysteine 493–cysteine 505, cysteine 512–cysteine 562, cysteine 527–cysteine 573, cysteine 540–cysteine 550, cysteine 557–cysteine 599, and cysteine 593–cysteine 605. Positions 467-469 match the D/ECD-tripeptide motif; the sequence is ECD. The N-linked (GlcNAc...) asparagine glycan is linked to asparagine 502.

It belongs to the venom metalloproteinase (M12B) family. P-III subfamily. Requires Zn(2+) as cofactor. As to expression, expressed by the venom gland.

The protein resides in the secreted. Its function is as follows. Snake venom metalloproteinase that impairs hemostasis in the envenomed animal. This chain is Zinc metalloproteinase-disintegrin-like 8, found in Crotalus adamanteus (Eastern diamondback rattlesnake).